Reading from the N-terminus, the 837-residue chain is Protein translocase subunit SecA (837 aa).

Residues glutamine 85, 103–107 (GEGKT), and aspartate 493 contribute to the ATP site. Zn(2+) contacts are provided by cysteine 821, cysteine 823, cysteine 832, and histidine 833.

Belongs to the SecA family. Monomer and homodimer. Part of the essential Sec protein translocation apparatus which comprises SecA, SecYEG and auxiliary proteins SecDF. Other proteins may also be involved. Zn(2+) serves as cofactor.

Its subcellular location is the cell membrane. It is found in the cytoplasm. It catalyses the reaction ATP + H2O + cellular proteinSide 1 = ADP + phosphate + cellular proteinSide 2.. Its function is as follows. Part of the Sec protein translocase complex. Interacts with the SecYEG preprotein conducting channel. Has a central role in coupling the hydrolysis of ATP to the transfer of proteins into and across the cell membrane, serving as an ATP-driven molecular motor driving the stepwise translocation of polypeptide chains across the membrane. This is Protein translocase subunit SecA from Streptococcus pneumoniae serotype 19F (strain G54).